The primary structure comprises 443 residues: Adenylate cyclase (443 aa).

The next 6 helical transmembrane spans lie at 47–69 (VLTI…QLAT), 74–93 (WYIA…VPLL), 98–120 (GLVA…GWDV), 124–143 (AGAQ…LVGI), 148–167 (LAVG…EFLV), and 180–202 (SVSF…WFAL). The Cytoplasmic segment spans residues 203–443 (RDTARAEAVM…RGAEPRTAGV (241 aa)). One can recognise a Guanylate cyclase domain in the interval 251-378 (SVLFADIVGF…DAVNVASRME (128 aa)). Mg(2+) is bound by residues D256 and D300.

The protein belongs to the adenylyl cyclase class-4/guanylyl cyclase family. As to quaternary structure, homodimer. Can also exist as monomer. Mg(2+) is required as a cofactor. Mn(2+) serves as cofactor.

It is found in the cell membrane. It carries out the reaction ATP = 3',5'-cyclic AMP + diphosphate. The sequence is that of Adenylate cyclase (cya) from Mycobacterium bovis (strain ATCC BAA-935 / AF2122/97).